The following is a 512-amino-acid chain: D-alanine--D-alanyl carrier protein ligase (512 aa).

Residue 152–153 coordinates ATP; it reads TS. A D-alanine-binding site is contributed by Asp199. Position 294-299 (294-299) interacts with ATP; the sequence is NAYGPT. A D-alanine-binding site is contributed by Val303. ATP-binding positions include Asp385, 397 to 400, and Lys499; that span reads YGGR. A D-alanine-binding site is contributed by Lys499.

It belongs to the ATP-dependent AMP-binding enzyme family. DltA subfamily.

It localises to the cytoplasm. The catalysed reaction is holo-[D-alanyl-carrier protein] + D-alanine + ATP = D-alanyl-[D-alanyl-carrier protein] + AMP + diphosphate. It participates in cell wall biogenesis; lipoteichoic acid biosynthesis. Catalyzes the first step in the D-alanylation of lipoteichoic acid (LTA), the activation of D-alanine and its transfer onto the D-alanyl carrier protein (Dcp) DltC. In an ATP-dependent two-step reaction, forms a high energy D-alanyl-AMP intermediate, followed by transfer of the D-alanyl residue as a thiol ester to the phosphopantheinyl prosthetic group of the Dcp. D-alanylation of LTA plays an important role in modulating the properties of the cell wall in Gram-positive bacteria, influencing the net charge of the cell wall. The protein is D-alanine--D-alanyl carrier protein ligase of Streptococcus pyogenes serotype M4 (strain MGAS10750).